The sequence spans 552 residues: Urocanate hydratase (552 aa).

NAD(+) is bound by residues 50–51, Q128, 174–176, E194, R199, 261–265, 271–272, and Y320; these read GG, GMG, QTSAH, and YI. C408 is an active-site residue. Residue G490 participates in NAD(+) binding.

It belongs to the urocanase family. NAD(+) serves as cofactor.

It localises to the cytoplasm. It catalyses the reaction 4-imidazolone-5-propanoate = trans-urocanate + H2O. Its pathway is amino-acid degradation; L-histidine degradation into L-glutamate; N-formimidoyl-L-glutamate from L-histidine: step 2/3. Catalyzes the conversion of urocanate to 4-imidazolone-5-propionate. This chain is Urocanate hydratase, found in Bdellovibrio bacteriovorus (strain ATCC 15356 / DSM 50701 / NCIMB 9529 / HD100).